Reading from the N-terminus, the 88-residue chain is Small ribosomal subunit protein bS16 (88 aa).

Belongs to the bacterial ribosomal protein bS16 family.

This Syntrophomonas wolfei subsp. wolfei (strain DSM 2245B / Goettingen) protein is Small ribosomal subunit protein bS16.